The chain runs to 1829 residues: Afadin (1829 aa).

The Ras-associating 1 domain maps to 39–133; that stretch reads FHGVMRFYFQ…GRFVLKNEND (95 aa). Residues 129–196 are disordered; it reads KNENDAIPAK…PSQGDDSENS (68 aa). Residues 146 to 186 are a coiled coil; that stretch reads EKQEKEGVIQNFKRTLSKKEKKEKKKREKEALRQASDKEER. Over residues 160–172 the composition is skewed to basic residues; the sequence is TLSKKEKKEKKKR. Positions 173-189 are enriched in basic and acidic residues; the sequence is EKEALRQASDKEERPSQ. S216, S246, and S256 each carry phosphoserine. Residues 246-348 form the Ras-associating 2 domain; the sequence is SGGTLRIYAD…LVFQLKRRPP (103 aa). Basic and acidic residues predominate over residues 356-371; that stretch reads KKHVEGKPLKGKDRAD. The tract at residues 356–377 is disordered; sequence KKHVEGKPLKGKDRADGSGYGS. Phosphoserine occurs at positions 391 and 424. The FHA domain maps to 441-507; the sequence is FGPGIQPHHC…KFVDPIQDHV (67 aa). Phosphoserine is present on residues S512, S557, S562, S589, and S655. A disordered region spans residues 539 to 595; the sequence is DIHSGTALPASRSTTRLDSDRVSSASSTAERGMVKPMIRLDQEQDYRRRESRTQDAA. The segment covering 576–591 has biased composition (basic and acidic residues); sequence IRLDQEQDYRRRESRT. The Dilute domain maps to 668–915; sequence NKMVSMMEGV…IENVVAVAEN (248 aa). One can recognise a PDZ domain in the interval 1014–1100; that stretch reads VITVTLKKQN…VVTLEVAKQG (87 aa). Phosphoserine is present on residues S1090, S1114, S1133, S1147, S1150, S1179, S1180, S1189, and S1206. Residues 1114-1230 form a disordered region; that stretch reads SPMMQRISDR…PRPEAYPIPT (117 aa). The span at 1120–1135 shows a compositional bias: basic and acidic residues; the sequence is ISDRRGSGKPRPKSEG. Residues 1139–1150 are compositionally biased toward polar residues; the sequence is YNNSAQNGSPES. Basic and acidic residues predominate over residues 1159–1179; the sequence is SEPKKLPGDDRLMKNRADHRS. A compositionally biased stretch (polar residues) spans 1195-1217; sequence PYTSGTAAKITSVSTGNLCTEEQ. Residues T1218 and T1239 each carry the phosphothreonine modification. S1245 and S1282 each carry phosphoserine. A compositionally biased stretch (basic and acidic residues) spans 1300 to 1309; it reads ESGMDRKCDS. 2 disordered regions span residues 1300 to 1533 and 1574 to 1724; these read ESGM…EKQQ and RLQE…KTQV. The segment covering 1316–1325 has biased composition (low complexity); that stretch reads SSSVESSTSS. The segment covering 1332–1344 has biased composition (polar residues); sequence SSKSVTPASTLTK. Position 1335 is a phosphoserine (S1335). At T1337 the chain carries Phosphothreonine. Residues 1371-1380 show a composition bias toward pro residues; that stretch reads LPPPPPPPPA. Residues 1401-1412 show a composition bias toward low complexity; the sequence is NQAAPQSAQVAA. The segment covering 1413-1447 has biased composition (basic and acidic residues); that stretch reads AERKKREEHQRWYEKEKARLEEERERKRREQERKL. Residues 1417–1454 are a coiled coil; sequence KREEHQRWYEKEKARLEEERERKRREQERKLGQMRTQS. A compositionally biased stretch (polar residues) spans 1450–1464; the sequence is MRTQSLNPASFSPLA. A compositionally biased stretch (basic and acidic residues) spans 1494-1510; that stretch reads TIERRDLQYITISKEEL. S1506 and S1517 each carry phosphoserine. Positions 1520–1533 are enriched in basic and acidic residues; sequence PWKRDAREKLEKQQ. Residues 1530–1564 adopt a coiled-coil conformation; the sequence is EKQQQMHIVDMLSKEIHELQNKGDRTAEESDRLRK. Residues 1583 to 1594 are compositionally biased toward acidic residues; it reads EDDDEEEDDDVD. The stretch at 1600-1672 forms a coiled coil; it reads QRLEAERRAR…SRLEAERRRQ (73 aa). Basic and acidic residues predominate over residues 1602–1682; that stretch reads LEAERRARLQ…HEEAARRLLE (81 aa). Position 1701 is a phosphoserine (S1701). Residues 1715–1724 are compositionally biased toward polar residues; sequence RNASYLKTQV. Residue S1726 is modified to Phosphoserine. The disordered stretch occupies residues 1742-1829; sequence DEEENYVPAG…TELENELNTK (88 aa). The segment covering 1753 to 1764 has biased composition (polar residues); sequence NSYSGSAGTTAG. Positions 1768–1781 are enriched in basic and acidic residues; the sequence is APRDTREKLSRSQD. Residues S1779 and S1804 each carry the phosphoserine modification. Residues 1809–1829 are compositionally biased toward basic and acidic residues; that stretch reads VSDKVKASRKLTELENELNTK. K1812 carries the N6-acetyllysine modification.

Homodimer. Interacts with F-actin, nectin and NECTIN3. Essential for the association of nectin and E-cadherin. Isoform 2/s-afadin does not interact with F-actin. Interacts with ZO-1 and occludin, but probably in an indirect manner. Interacts with RIT1, RIT2, NRXN1 and BCR. Interacts with ADAM10; the interaction locks ADAM10 at adherens junctions following ADAM10 recruitment to adherens junctions by TSPAN33. In terms of tissue distribution, isoform 1 is widely expressed, including in heart, brain, spleen, lung, liver, skeletal muscle, kidney and testis. Isoform 2 is mainly expressed in the brain.

The protein localises to the cell junction. It localises to the adherens junction. Functionally, belongs to an adhesion system, probably together with the E-cadherin-catenin system, which plays a role in the organization of homotypic, interneuronal and heterotypic cell-cell adherens junctions (AJs). Nectin- and actin-filament-binding protein that connects nectin to the actin cytoskeleton. May play a key role in the organization of epithelial structures of the embryonic ectoderm. Essential for the organization of adherens junctions. This is Afadin from Rattus norvegicus (Rat).